The sequence spans 70 residues: KKNGYAVDSSGKAPECLLSNYCNNECTKVHYADKGYCCLLSCYCFGLSDDKKVLDISDTRKKYCDYTIIN.

In terms of domain architecture, LCN-type CS-alpha/beta spans 2-65; it reads KNGYAVDSSG…ISDTRKKYCD (64 aa). Disulfide bonds link Cys16-Cys37, Cys22-Cys42, Cys26-Cys44, and Cys38-Cys64.

As to expression, expressed by the venom gland.

The protein localises to the secreted. In terms of biological role, excitatory insect beta-toxins induce a spastic paralysis. They bind voltage-independently at site-4 of sodium channels (Nav) and shift the voltage of activation toward more negative potentials thereby affecting sodium channel activation and promoting spontaneous and repetitive firing. The protein is Toxin Isom2 of Isometrus vittatus (Bark scorpion).